A 203-amino-acid chain; its full sequence is CASP-like protein 2U6 (203 aa).

The Cytoplasmic segment spans residues 1 to 31 (MSEHRIPVAADKKISPPISAGEQKGCKGLKR). Residues 32-52 (TDLMLRFAAFVCCTVTMVVLI) form a helical membrane-spanning segment. The Extracellular segment spans residues 53-84 (TDKQTSAIQVPGFNNLTITKTVSFDLAKAFVY). N-linked (GlcNAc...) asparagine glycosylation occurs at N67. The helical transmembrane segment at 85–105 (LVSAAGIGAGYTLLVLVLSII) threads the bilayer. Residues 106-111 (SAERSK) are Cytoplasmic-facing. Residues 112-132 (AIAWFIFVFDQLITYVLLAAA) form a helical membrane-spanning segment. The Extracellular segment spans residues 133 to 164 (AASTEVAYMGAHAPPEASWLKVCSLFGRFCHQ). Residues 165–185 (LGASLVTSLISTVLFAFSAAI) form a helical membrane-spanning segment. At 186-203 (SAYYLFSNTNVRPAYSKG) the chain is on the cytoplasmic side.

This sequence belongs to the Casparian strip membrane proteins (CASP) family. Homodimer and heterodimers.

The protein localises to the cell membrane. The sequence is that of CASP-like protein 2U6 from Selaginella moellendorffii (Spikemoss).